Consider the following 389-residue polypeptide: 8-amino-7-oxononanoate synthase (389 aa).

Position 23 (arginine 23) interacts with substrate. 114–115 (GY) is a binding site for pyridoxal 5'-phosphate. Position 139 (histidine 139) interacts with substrate. Residues serine 185, histidine 213, and threonine 242 each coordinate pyridoxal 5'-phosphate. At lysine 245 the chain carries N6-(pyridoxal phosphate)lysine. Threonine 357 provides a ligand contact to substrate.

Belongs to the class-II pyridoxal-phosphate-dependent aminotransferase family. BioF subfamily. As to quaternary structure, homodimer. Pyridoxal 5'-phosphate is required as a cofactor.

The catalysed reaction is 6-carboxyhexanoyl-[ACP] + L-alanine + H(+) = (8S)-8-amino-7-oxononanoate + holo-[ACP] + CO2. The protein operates within cofactor biosynthesis; biotin biosynthesis. Functionally, catalyzes the decarboxylative condensation of pimeloyl-[acyl-carrier protein] and L-alanine to produce 8-amino-7-oxononanoate (AON), [acyl-carrier protein], and carbon dioxide. This is 8-amino-7-oxononanoate synthase from Acidithiobacillus ferrooxidans (strain ATCC 23270 / DSM 14882 / CIP 104768 / NCIMB 8455) (Ferrobacillus ferrooxidans (strain ATCC 23270)).